A 446-amino-acid polypeptide reads, in one-letter code: Packaging protein 1 (446 aa).

The tract at residues 1–71 (MEEKAGLGRL…QPQASKPKKH (71 aa)) is disordered. Over residues 31-43 (FHSDRNHPNKEAE) the composition is skewed to basic and acidic residues. 170-177 (GPTGCGKS) lines the ATP pocket. The segment at 439 to 446 (RYYHSKKK) is DNA-binding.

Belongs to the adenoviridae packaging protein 1 family. As to quaternary structure, homodimer. Part of a genome packaging complex composed of packaging proteins 1, 2 and 3; this complex specifically binds to the packaging sequence on the left end of viral genomic DNA and performs packaging of the viral genome. Interacts with protein 33K.

The protein localises to the virion. It localises to the host nucleus. Its subcellular location is the host nucleoplasm. The protein resides in the host nucleolus. Its function is as follows. Component of the packaging machinery which encapsidates the viral DNA into preformed capsids and transcriptional activator of the viral major late promoter (MLP). Binds, along with packaging proteins 2 and 3, to the specific packaging sequence on the left end of viral genomic DNA and displays ATPase activity thereby providing the power stroke of the packaging machinery. The activity of packaging protein IVa2 is stimulated by protein 33K which acts as a terminase. May be the protein that pumps DNA into the capsid powered by ATP hydrolysis. Specifically binds to the 5'-CG-3' nucleotides of the repeats making up the packaging sequence. Component of the DEF-A and DEF-B transcription factors that bind downstream elements of the major late promoter (MLP), and stimulate transcription from the MLP after initiation of viral DNA replication. DEF-A is a heterodimer packaging proteins 1 and 2 and DEF-B is a homodimer of packaging protein 1. This is Packaging protein 1 from Canine adenovirus serotype 2 (strain Toronto A 26-61) (CAdV-2).